A 290-amino-acid polypeptide reads, in one-letter code: Undecaprenyl-diphosphatase (290 aa).

Helical transmembrane passes span 1 to 21 (MALW…FLPV), 49 to 69 (MILF…VVFW), 101 to 121 (LFWL…TLKA), 126 to 146 (VFAS…LLWW), 160 to 180 (INLK…MPGL), 203 to 223 (YSFF…AIEV), 232 to 252 (VGFS…IISL), and 266 to 286 (VFSF…IDLA).

The protein belongs to the UppP family.

Its subcellular location is the cell inner membrane. The enzyme catalyses di-trans,octa-cis-undecaprenyl diphosphate + H2O = di-trans,octa-cis-undecaprenyl phosphate + phosphate + H(+). In terms of biological role, catalyzes the dephosphorylation of undecaprenyl diphosphate (UPP). Confers resistance to bacitracin. The chain is Undecaprenyl-diphosphatase from Alkalilimnicola ehrlichii (strain ATCC BAA-1101 / DSM 17681 / MLHE-1).